We begin with the raw amino-acid sequence, 133 residues long: Interleukin-5 (133 aa).

An N-terminal signal peptide occupies residues Met-1 to Ala-20. N-linked (GlcNAc...) asparagine glycosylation is found at Asn-46, Asn-75, and Asn-89.

This sequence belongs to the IL-5 family. As to quaternary structure, homodimer; disulfide-linked. Interacts with IL5RA. Interacts with CSF2RB. As to expression, expressed in lymphoid cells, including spleen, thymus, lymph nodes and peripheral blood mononuclear cells.

The protein resides in the secreted. In terms of biological role, homodimeric cytokine expressed predominantly by T-lymphocytes and NK cells that plays an important role in the survival, differentiation, and chemotaxis of eosinophils. Also acts on activated and resting B-cells to induce immunoglobulin production, growth, and differentiation. Mechanistically, exerts its biological effects through a receptor composed of IL5RA subunit and the cytokine receptor common subunit beta/CSF2RB. Binding to the receptor leads to activation of various kinases including LYN, SYK and JAK2 and thereby propagates signals through the RAS-MAPK and JAK-STAT5 pathways respectively. The polypeptide is Interleukin-5 (Il5) (Mus musculus (Mouse)).